A 201-amino-acid polypeptide reads, in one-letter code: ATP-dependent Clp protease proteolytic subunit (201 aa).

Ser-98 (nucleophile) is an active-site residue. His-123 is an active-site residue.

The protein belongs to the peptidase S14 family. Fourteen ClpP subunits assemble into 2 heptameric rings which stack back to back to give a disk-like structure with a central cavity, resembling the structure of eukaryotic proteasomes.

Its subcellular location is the cytoplasm. The enzyme catalyses Hydrolysis of proteins to small peptides in the presence of ATP and magnesium. alpha-casein is the usual test substrate. In the absence of ATP, only oligopeptides shorter than five residues are hydrolyzed (such as succinyl-Leu-Tyr-|-NHMec, and Leu-Tyr-Leu-|-Tyr-Trp, in which cleavage of the -Tyr-|-Leu- and -Tyr-|-Trp bonds also occurs).. Cleaves peptides in various proteins in a process that requires ATP hydrolysis. Has a chymotrypsin-like activity. Plays a major role in the degradation of misfolded proteins. The sequence is that of ATP-dependent Clp protease proteolytic subunit from Rickettsia typhi (strain ATCC VR-144 / Wilmington).